A 93-amino-acid polypeptide reads, in one-letter code: Guanine nucleotide-binding protein subunit gamma 1 (93 aa).

Residues Thr12–Leu52 adopt a coiled-coil conformation. One can recognise a G protein gamma domain in the interval Ala20 to Leu93. Cys88 carries the S-palmitoyl cysteine lipid modification. Residue Cys90 is modified to Cysteine methyl ester. Cys90 carries the S-farnesyl cysteine lipid modification. Positions Trp91 to Leu93 are cleaved as a propeptide — removed in mature form.

As to quaternary structure, g proteins are composed of 3 units, alpha, beta and gamma. Interacts with the beta subunit RGB1.

The protein resides in the cell membrane. Functionally, guanine nucleotide-binding proteins (G proteins) are involved as modulators or transducers in various transmembrane signaling systems. The chain is Guanine nucleotide-binding protein subunit gamma 1 from Oryza sativa subsp. indica (Rice).